An 83-amino-acid chain; its full sequence is Exodeoxyribonuclease 7 small subunit (83 aa).

The protein belongs to the XseB family. As to quaternary structure, heterooligomer composed of large and small subunits.

It is found in the cytoplasm. It carries out the reaction Exonucleolytic cleavage in either 5'- to 3'- or 3'- to 5'-direction to yield nucleoside 5'-phosphates.. Its function is as follows. Bidirectionally degrades single-stranded DNA into large acid-insoluble oligonucleotides, which are then degraded further into small acid-soluble oligonucleotides. This Rhizobium leguminosarum bv. trifolii (strain WSM2304) protein is Exodeoxyribonuclease 7 small subunit.